The following is a 169-amino-acid chain: 16S rRNA aminocarboxypropyltransferase (169 aa).

Residues T15, V65, L88, and T107 each coordinate S-adenosyl-L-methionine.

It belongs to the TDD superfamily. TSR3 family.

It localises to the cytoplasm. The enzyme catalyses an N(1)-methylpseudouridine in rRNA + S-adenosyl-L-methionine = N(1)-methyl-N(3)-[(3S)-3-amino-3-carboxypropyl]pseudouridine in rRNA + S-methyl-5'-thioadenosine + H(+). Aminocarboxypropyltransferase that catalyzes the aminocarboxypropyl transfer on pseudouridine corresponding to position 914 in M.jannaschii 16S rRNA. It constitutes the last step in biosynthesis of the hypermodified N1-methyl-N3-(3-amino-3-carboxypropyl) pseudouridine (m1acp3-Psi). The protein is 16S rRNA aminocarboxypropyltransferase of Methanopyrus kandleri (strain AV19 / DSM 6324 / JCM 9639 / NBRC 100938).